The following is a 66-amino-acid chain: Large ribosomal subunit protein bL35 (66 aa).

Composition is skewed to basic residues over residues 1–16 (MPKQ…RFKR) and 31–45 (HRFH…RQLR). The disordered stretch occupies residues 1-52 (MPKQKTHRASAKRFKRTGNGGLKRSNAYTSHRFHGKTKKQRRQLRKASMVSA).

It belongs to the bacterial ribosomal protein bL35 family.

This Ligilactobacillus salivarius (strain UCC118) (Lactobacillus salivarius) protein is Large ribosomal subunit protein bL35.